The following is a 249-amino-acid chain: Aspartate/glutamate leucyltransferase (249 aa).

Belongs to the R-transferase family. Bpt subfamily.

It localises to the cytoplasm. It catalyses the reaction N-terminal L-glutamyl-[protein] + L-leucyl-tRNA(Leu) = N-terminal L-leucyl-L-glutamyl-[protein] + tRNA(Leu) + H(+). The enzyme catalyses N-terminal L-aspartyl-[protein] + L-leucyl-tRNA(Leu) = N-terminal L-leucyl-L-aspartyl-[protein] + tRNA(Leu) + H(+). Functionally, functions in the N-end rule pathway of protein degradation where it conjugates Leu from its aminoacyl-tRNA to the N-termini of proteins containing an N-terminal aspartate or glutamate. In Brucella canis (strain ATCC 23365 / NCTC 10854 / RM-666), this protein is Aspartate/glutamate leucyltransferase.